Here is a 48-residue protein sequence, read N- to C-terminus: Delta-stichotoxin-Hcr1b (48 aa).

Intrachain disulfides connect Cys3–Cys43, Cys5–Cys33, and Cys26–Cys44.

The protein belongs to the sea anemone sodium channel inhibitory toxin family. Type II subfamily.

The protein localises to the secreted. It localises to the nematocyst. Binds to site 3 of voltage-gated sodium channels and inhibits the inactivation process. This Radianthus crispa (Leathery sea anemone) protein is Delta-stichotoxin-Hcr1b.